Consider the following 319-residue polypeptide: GTP 3',8-cyclase (319 aa).

In terms of domain architecture, Radical SAM core spans 4 to 227 (KHGRKINYLR…VETDKSSTAL (224 aa)). A GTP-binding site is contributed by arginine 13. Residues cysteine 20 and cysteine 24 each contribute to the [4Fe-4S] cluster site. Residue tyrosine 26 coordinates S-adenosyl-L-methionine. Position 27 (cysteine 27) interacts with [4Fe-4S] cluster. Arginine 63 serves as a coordination point for GTP. Glycine 67 is an S-adenosyl-L-methionine binding site. Threonine 94 provides a ligand contact to GTP. Serine 118 contacts S-adenosyl-L-methionine. Lysine 155 provides a ligand contact to GTP. Residue methionine 189 coordinates S-adenosyl-L-methionine. The [4Fe-4S] cluster site is built by cysteine 249 and cysteine 252. 254–256 (RVR) is a GTP binding site. A [4Fe-4S] cluster-binding site is contributed by cysteine 266.

It belongs to the radical SAM superfamily. MoaA family. As to quaternary structure, monomer and homodimer. [4Fe-4S] cluster serves as cofactor.

It catalyses the reaction GTP + AH2 + S-adenosyl-L-methionine = (8S)-3',8-cyclo-7,8-dihydroguanosine 5'-triphosphate + 5'-deoxyadenosine + L-methionine + A + H(+). The protein operates within cofactor biosynthesis; molybdopterin biosynthesis. Functionally, catalyzes the cyclization of GTP to (8S)-3',8-cyclo-7,8-dihydroguanosine 5'-triphosphate. The polypeptide is GTP 3',8-cyclase (Clostridium botulinum (strain Langeland / NCTC 10281 / Type F)).